A 141-amino-acid chain; its full sequence is Protein KRTCAP2 homolog (141 aa).

4 helical membrane-spanning segments follow: residues 11 to 31 (VVSSIISGLLSIVLFGTLRFC), 42 to 62 (VLLGGYLFSWVFILSLTCVSN), 74 to 94 (AKLLPEIIFCLSLTVAAAGLV), and 97 to 117 (VCATTSVLFSLVGLYFLNRIS).

It belongs to the KRTCAP2 family. In terms of assembly, component of the oligosaccharyltransferase (OST) complex.

Its subcellular location is the membrane. Subunit of the oligosaccharyl transferase (OST) complex that catalyzes the initial transfer of a defined glycan (Glc(3)Man(9)GlcNAc(2) in eukaryotes) from the lipid carrier dolichol-pyrophosphate to an asparagine residue within an Asn-X-Ser/Thr consensus motif in nascent polypeptide chains, the first step in protein N-glycosylation. N-glycosylation occurs cotranslationally and the complex associates with the Sec61 complex at the channel-forming translocon complex that mediates protein translocation across the endoplasmic reticulum (ER). All subunits are required for a maximal enzyme activity. The polypeptide is Protein KRTCAP2 homolog (Drosophila melanogaster (Fruit fly)).